Consider the following 256-residue polypeptide: Thiazole synthase (256 aa).

The active-site Schiff-base intermediate with DXP is the K95. 1-deoxy-D-xylulose 5-phosphate contacts are provided by residues G156, 182 to 183, and 204 to 205; these read AG and NT.

It belongs to the ThiG family. In terms of assembly, homotetramer. Forms heterodimers with either ThiH or ThiS.

It is found in the cytoplasm. It catalyses the reaction [ThiS sulfur-carrier protein]-C-terminal-Gly-aminoethanethioate + 2-iminoacetate + 1-deoxy-D-xylulose 5-phosphate = [ThiS sulfur-carrier protein]-C-terminal Gly-Gly + 2-[(2R,5Z)-2-carboxy-4-methylthiazol-5(2H)-ylidene]ethyl phosphate + 2 H2O + H(+). It participates in cofactor biosynthesis; thiamine diphosphate biosynthesis. Catalyzes the rearrangement of 1-deoxy-D-xylulose 5-phosphate (DXP) to produce the thiazole phosphate moiety of thiamine. Sulfur is provided by the thiocarboxylate moiety of the carrier protein ThiS. In vitro, sulfur can be provided by H(2)S. This is Thiazole synthase from Escherichia coli O45:K1 (strain S88 / ExPEC).